Reading from the N-terminus, the 181-residue chain is ADP-ribosylation factor 1 (181 aa).

Glycine 2 carries the N-myristoyl glycine lipid modification. GTP is bound by residues 24–31 (GLDAAGKT), 67–71 (DVGGQ), and 126–129 (NKQD).

The protein belongs to the small GTPase superfamily. Arf family.

It is found in the golgi apparatus. It carries out the reaction GTP + H2O = GDP + phosphate + H(+). Functionally, GTP-binding protein involved in protein trafficking; may modulate vesicle budding and uncoating within the Golgi apparatus. The polypeptide is ADP-ribosylation factor 1 (ARF1) (Daucus carota (Wild carrot)).